The chain runs to 247 residues: Fibroblast growth factor 14 (247 aa).

2 disordered regions span residues 1-37 (MAAA…SKNR) and 216-247 (ETVP…CKTT). Basic and acidic residues predominate over residues 15-25 (QAREQHWDRPS).

The protein belongs to the heparin-binding growth factors family. Interacts with SCN8A. In terms of tissue distribution, brain and testis; widely distributed in the developing nervous system. In adult, high levels in the granular layer of the cerebellum, less in hippocampus and olfactory bulb.

The protein resides in the nucleus. Functionally, probably involved in nervous system development and function. This chain is Fibroblast growth factor 14 (Fgf14), found in Mus musculus (Mouse).